Reading from the N-terminus, the 275-residue chain is Beta-lactamase OXA-3 (275 aa).

Positions 1-21 are cleaved as a signal peptide; the sequence is MAIRIFAILFSTFVFGTFAHA. The Acyl-ester intermediate role is filled by serine 72. An N6-carboxylysine modification is found at lysine 75. Residue 210–212 coordinates substrate; it reads KTG.

This sequence belongs to the class-D beta-lactamase family.

The catalysed reaction is a beta-lactam + H2O = a substituted beta-amino acid. Its function is as follows. This is an oxacillin-hydrolyzing beta-lactamase. In Pseudomonas aeruginosa, this protein is Beta-lactamase OXA-3 (bla).